A 786-amino-acid polypeptide reads, in one-letter code: Endonuclease MutS2 (786 aa).

Residue 332–339 (GPNTGGKT) coordinates ATP. The Smr domain maps to 710 to 785 (VDLRGLDAEE…GDGVTMVELK (76 aa)).

The protein belongs to the DNA mismatch repair MutS family. MutS2 subfamily. As to quaternary structure, homodimer. Binds to stalled ribosomes, contacting rRNA.

Endonuclease that is involved in the suppression of homologous recombination and thus may have a key role in the control of bacterial genetic diversity. Functionally, acts as a ribosome collision sensor, splitting the ribosome into its 2 subunits. Detects stalled/collided 70S ribosomes which it binds and splits by an ATP-hydrolysis driven conformational change. Acts upstream of the ribosome quality control system (RQC), a ribosome-associated complex that mediates the extraction of incompletely synthesized nascent chains from stalled ribosomes and their subsequent degradation. Probably generates substrates for RQC. This chain is Endonuclease MutS2, found in Clostridium beijerinckii (strain ATCC 51743 / NCIMB 8052) (Clostridium acetobutylicum).